We begin with the raw amino-acid sequence, 262 residues long: Acyl-[acyl-carrier-protein]--UDP-N-acetylglucosamine O-acyltransferase (262 aa).

Belongs to the transferase hexapeptide repeat family. LpxA subfamily. Homotrimer.

It localises to the cytoplasm. It carries out the reaction a (3R)-hydroxyacyl-[ACP] + UDP-N-acetyl-alpha-D-glucosamine = a UDP-3-O-[(3R)-3-hydroxyacyl]-N-acetyl-alpha-D-glucosamine + holo-[ACP]. It participates in glycolipid biosynthesis; lipid IV(A) biosynthesis; lipid IV(A) from (3R)-3-hydroxytetradecanoyl-[acyl-carrier-protein] and UDP-N-acetyl-alpha-D-glucosamine: step 1/6. Involved in the biosynthesis of lipid A, a phosphorylated glycolipid that anchors the lipopolysaccharide to the outer membrane of the cell. The chain is Acyl-[acyl-carrier-protein]--UDP-N-acetylglucosamine O-acyltransferase from Pasteurella multocida (strain Pm70).